Consider the following 164-residue polypeptide: UPF0303 protein RHE_CH02903 (164 aa).

The protein belongs to the UPF0303 family.

The chain is UPF0303 protein RHE_CH02903 from Rhizobium etli (strain ATCC 51251 / DSM 11541 / JCM 21823 / NBRC 15573 / CFN 42).